Reading from the N-terminus, the 195-residue chain is Large ribosomal subunit protein bL17 (195 aa).

Residues 125–195 are disordered; that stretch reads ANRARRVGAS…PTQDSDADKS (71 aa). A compositionally biased stretch (low complexity) spans 136-152; the sequence is QTAPVAAAAAPQAAVEP. 2 stretches are compositionally biased toward acidic residues: residues 153 to 173 and 183 to 195; these read EATEGPDADDSSALPEAEDTT and TDDPTQDSDADKS.

Belongs to the bacterial ribosomal protein bL17 family. In terms of assembly, part of the 50S ribosomal subunit. Contacts protein L32.

The chain is Large ribosomal subunit protein bL17 from Mycobacterium sp. (strain JLS).